We begin with the raw amino-acid sequence, 77 residues long: U8-lycotoxin-Ls1o (77 aa).

The first 20 residues, 1–20 (MKLMIFTGLVLFAIVSLIEA), serve as a signal peptide directing secretion. The propeptide occupies 21-26 (QAENGK).

It belongs to the neurotoxin 19 (CSTX) family. 08 (U8-Lctx) subfamily. In terms of processing, contains 4 disulfide bonds. In terms of tissue distribution, expressed by the venom gland.

Its subcellular location is the secreted. In Lycosa singoriensis (Wolf spider), this protein is U8-lycotoxin-Ls1o.